The primary structure comprises 143 residues: Transcriptional regulator MraZ (143 aa).

SpoVT-AbrB domains follow at residues Thr-5 to Glu-47 and Ala-76 to Ala-119.

It belongs to the MraZ family. As to quaternary structure, forms oligomers.

The protein localises to the cytoplasm. It is found in the nucleoid. This chain is Transcriptional regulator MraZ, found in Corynebacterium urealyticum (strain ATCC 43042 / DSM 7109).